The following is a 668-amino-acid chain: Break repair meiotic recombinase recruitment factor 1 (668 aa).

Disordered stretches follow at residues 1–142 (MTKR…AQSP), 155–333 (LQEA…GCSS), 349–465 (LEER…GGQN), 482–521 (VLEH…HSAD), and 642–668 (LGGK…WREL). Basic and acidic residues predominate over residues 114-125 (TRKEEMKDEDRG). Positions 166 to 180 (QADSARPEQSSQSPV) are enriched in polar residues. Residues 208-251 (SQDHLSEQGADDSKPETDRVPGDGGQKEHLPSIDSEGEKPDRGA) are compositionally biased toward basic and acidic residues. Low complexity predominate over residues 279–296 (TPASAPTSGPAPGLGPAS). Polar residues predominate over residues 305-316 (AQGSPDPQQTPS). Ser370 bears the Phosphoserine mark. The segment covering 391–400 (TGETTGESGE) has biased composition (low complexity).

In terms of assembly, interacts with HSF2BP (via N-terminus) and BRCA2; the interaction with HSF2BP is direct and allows the formation of a ternary complex. The complex BRME1:HSF2BP:BRCA2 interacts with SPATA22, MEIOB and RAD51.

The protein resides in the chromosome. Its function is as follows. Meiotic recombination factor component of recombination bridges involved in meiotic double-strand break repair. Modulates the localization of recombinases DMC1:RAD51 to meiotic double-strand break (DSB) sites through the interaction with and stabilization of the BRCA2:HSF2BP complex during meiotic recombination. Indispensable for the DSB repair, homologous synapsis, and crossover formation that are needed for progression past metaphase I, is essential for spermatogenesis and male fertility. The chain is Break repair meiotic recombinase recruitment factor 1 from Homo sapiens (Human).